The sequence spans 139 residues: uncharacterized protein (139 aa).

The 132-residue stretch at 8–139 (ANLLDHALTK…FLAIIAKLAQ (132 aa)) folds into the HTH marR-type domain. The H-T-H motif DNA-binding region spans 53 to 76 (IKDILKEVTLSPSATTTALNHLEQ).

This is an uncharacterized protein from Bacillus subtilis (strain 168).